Reading from the N-terminus, the 456-residue chain is MKLKAIILAAGTGTRMKSKMPKVLHKVCGQTMLGHVIDVSKDSKAEECIVVVGHGAEEVQKTLPEGVKTVLQAEQLGTGHAVMVAEEHIETQGTVLVLYGDGPLITEETLNALMTYHQEGKYSATVLTAELENPTGYGRIIRDDDDRLKTIVEEKDTTVGEKEVREINSGIYCFDSKVLKETLPKIQNNNSQKEYYLTDALTIIKQEGLKVGVYQIENYEDIMAVNSREQLAEVEEVMQRRIVKKHMEAGVTFIDPQSTYIEKTVKVGMDTILHPGVILKGATEIGEDCIIGHNSRIENSILKNGIEVQSSTIIESTIDDHATIGPYAYLRPQSHIGKHVKVGDFVEVKNATIDDHSKAAHLAYIGDAEIGKHVNIGCGVIFVNYDGIKKHKTIIKDHAFVGSNSNLVAPITIQESAFVASGSTITREVPAGALAVGRSRQENKEGWVARKGVGKK.

The pyrophosphorylase stretch occupies residues 1–228 (MKLKAIILAA…YEDIMAVNSR (228 aa)). Residues 8–11 (LAAG), Lys22, Gln72, 77–78 (GT), 99–101 (YGD), Gly138, Glu153, Asn168, and Asn226 each bind UDP-N-acetyl-alpha-D-glucosamine. Asp101 is a Mg(2+) binding site. Asn226 is a Mg(2+) binding site. The segment at 229 to 249 (EQLAEVEEVMQRRIVKKHMEA) is linker. The interval 250–456 (GVTFIDPQST…WVARKGVGKK (207 aa)) is N-acetyltransferase. UDP-N-acetyl-alpha-D-glucosamine-binding residues include Arg331 and Lys349. Catalysis depends on His361, which acts as the Proton acceptor. Positions 364 and 375 each coordinate UDP-N-acetyl-alpha-D-glucosamine. Acetyl-CoA-binding positions include 384–385 (NY), Ser403, Ser421, and Arg438.

In the N-terminal section; belongs to the N-acetylglucosamine-1-phosphate uridyltransferase family. It in the C-terminal section; belongs to the transferase hexapeptide repeat family. As to quaternary structure, homotrimer. Mg(2+) serves as cofactor.

The protein localises to the cytoplasm. It catalyses the reaction alpha-D-glucosamine 1-phosphate + acetyl-CoA = N-acetyl-alpha-D-glucosamine 1-phosphate + CoA + H(+). It carries out the reaction N-acetyl-alpha-D-glucosamine 1-phosphate + UTP + H(+) = UDP-N-acetyl-alpha-D-glucosamine + diphosphate. It functions in the pathway nucleotide-sugar biosynthesis; UDP-N-acetyl-alpha-D-glucosamine biosynthesis; N-acetyl-alpha-D-glucosamine 1-phosphate from alpha-D-glucosamine 6-phosphate (route II): step 2/2. The protein operates within nucleotide-sugar biosynthesis; UDP-N-acetyl-alpha-D-glucosamine biosynthesis; UDP-N-acetyl-alpha-D-glucosamine from N-acetyl-alpha-D-glucosamine 1-phosphate: step 1/1. Its pathway is bacterial outer membrane biogenesis; LPS lipid A biosynthesis. Its function is as follows. Catalyzes the last two sequential reactions in the de novo biosynthetic pathway for UDP-N-acetylglucosamine (UDP-GlcNAc). The C-terminal domain catalyzes the transfer of acetyl group from acetyl coenzyme A to glucosamine-1-phosphate (GlcN-1-P) to produce N-acetylglucosamine-1-phosphate (GlcNAc-1-P), which is converted into UDP-GlcNAc by the transfer of uridine 5-monophosphate (from uridine 5-triphosphate), a reaction catalyzed by the N-terminal domain. This is Bifunctional protein GlmU from Alkaliphilus metalliredigens (strain QYMF).